Reading from the N-terminus, the 88-residue chain is MATKIRLRRMGAKKNPFYRLIVADSNAPRDGRFIEEIGFYDPTKQPEVLNIDEEKAMKWLATGAQPSDTAKSLLRKAGVLAKYHESKK.

Belongs to the bacterial ribosomal protein bS16 family.

The protein is Small ribosomal subunit protein bS16 of Desulfitobacterium hafniense (strain DSM 10664 / DCB-2).